A 213-amino-acid chain; its full sequence is Receptor-binding cancer antigen expressed on SiSo cells (213 aa).

Over 1–6 (MAITQF) the chain is Extracellular. Residues 7–27 (RLFKFCTCLATVFSFLKRLIC) traverse the membrane as a helical; Signal-anchor for type III membrane protein segment. Residues 28–213 (RSGRGRKLSG…EQNKIGVKLS (186 aa)) are Cytoplasmic-facing. Residue Ser-36 is modified to Phosphoserine. The residue at position 41 (Thr-41) is a Phosphothreonine. The residue at position 94 (Tyr-94) is a Phosphotyrosine. Residues 163 to 211 (EDAAWQAEEVLRQQKLADREKRAAEQQRKKMEKEAQRLMKKEQNKIGVK) adopt a coiled-coil conformation. Positions 178–206 (LADREKRAAEQQRKKMEKEAQRLMKKEQN) are enriched in basic and acidic residues. The disordered stretch occupies residues 178-213 (LADREKRAAEQQRKKMEKEAQRLMKKEQNKIGVKLS).

Homodimer. Widely expressed. Expressed in ovary, testis, prostate, thymus, muscle and heart, but not in small intestine, colon, lymph nodes, or peripherical blood lymphocytes. The protein is not detected in any of the above organs.

The protein localises to the golgi apparatus membrane. May participate in suppression of cell proliferation and induces apoptotic cell death through activation of interleukin-1-beta converting enzyme (ICE)-like proteases. The polypeptide is Receptor-binding cancer antigen expressed on SiSo cells (EBAG9) (Homo sapiens (Human)).